We begin with the raw amino-acid sequence, 365 residues long: Peptide chain release factor 2 (365 aa).

An N5-methylglutamine modification is found at glutamine 252.

The protein belongs to the prokaryotic/mitochondrial release factor family. In terms of processing, methylated by PrmC. Methylation increases the termination efficiency of RF2.

It is found in the cytoplasm. Functionally, peptide chain release factor 2 directs the termination of translation in response to the peptide chain termination codons UGA and UAA. The sequence is that of Peptide chain release factor 2 from Pseudoalteromonas translucida (strain TAC 125).